A 373-amino-acid chain; its full sequence is tRNA-specific 2-thiouridylase MnmA (373 aa).

Residues A7–S14 and L33 each bind ATP. The Nucleophile role is filled by C101. A disulfide bridge links C101 with C215. Residue G125 participates in ATP binding. An interaction with tRNA region spans residues K165–Q167. C215 (cysteine persulfide intermediate) is an active-site residue.

The protein belongs to the MnmA/TRMU family.

Its subcellular location is the cytoplasm. The catalysed reaction is S-sulfanyl-L-cysteinyl-[protein] + uridine(34) in tRNA + AH2 + ATP = 2-thiouridine(34) in tRNA + L-cysteinyl-[protein] + A + AMP + diphosphate + H(+). Catalyzes the 2-thiolation of uridine at the wobble position (U34) of tRNA, leading to the formation of s(2)U34. The sequence is that of tRNA-specific 2-thiouridylase MnmA from Roseiflexus sp. (strain RS-1).